We begin with the raw amino-acid sequence, 510 residues long: Citrate lyase alpha chain (510 aa).

In terms of assembly, oligomer with a subunit composition of (alpha,beta,gamma)6.

The protein localises to the cytoplasm. It catalyses the reaction citrate = oxaloacetate + acetate. The enzyme catalyses citrate + acetyl-CoA = (3S)-citryl-CoA + acetate. In terms of biological role, represents a citrate:acetyl-ACP transferase. The sequence is that of Citrate lyase alpha chain (citF) from Escherichia coli (strain K12).